Consider the following 416-residue polypeptide: Adenylosuccinate synthetase (416 aa).

GTP-binding positions include 11 to 17 and 39 to 41; these read GDEGKGK and GHT. Asp12 acts as the Proton acceptor in catalysis. Residues Asp12 and Gly39 each contribute to the Mg(2+) site. IMP contacts are provided by residues 12–15, 37–40, Thr125, Arg139, Gln214, Thr229, and Arg290; these read DEGK and NAGH. His40 functions as the Proton donor in the catalytic mechanism. 286-292 serves as a coordination point for substrate; it reads TTTGRPR. Residues Arg292, 318 to 320, and 405 to 407 contribute to the GTP site; these read KLD and SLG.

This sequence belongs to the adenylosuccinate synthetase family. In terms of assembly, homodimer. It depends on Mg(2+) as a cofactor.

The protein localises to the cytoplasm. It catalyses the reaction IMP + L-aspartate + GTP = N(6)-(1,2-dicarboxyethyl)-AMP + GDP + phosphate + 2 H(+). It functions in the pathway purine metabolism; AMP biosynthesis via de novo pathway; AMP from IMP: step 1/2. In terms of biological role, plays an important role in the de novo pathway of purine nucleotide biosynthesis. Catalyzes the first committed step in the biosynthesis of AMP from IMP. This is Adenylosuccinate synthetase from Picrophilus torridus (strain ATCC 700027 / DSM 9790 / JCM 10055 / NBRC 100828 / KAW 2/3).